We begin with the raw amino-acid sequence, 376 residues long: Pre-mRNA-splicing factor cwf25 (376 aa).

Positions 25 to 60 (KDEQAHKEEMKRVEQLRREIEEERQLLELHRLQEAA) form a coiled coil. 2 disordered regions span residues 153–211 (LMEK…DRNN) and 258–289 (RTSR…ITQR). Basic and acidic residues predominate over residues 154-167 (MEKRKYSLDSDRKS). Over residues 168–178 (KERRHRDRHHR) the composition is skewed to basic residues. A compositionally biased stretch (basic and acidic residues) spans 179–199 (SNQDRSRERSDNEQHSSDKRE). Residues serine 266 and serine 268 each carry the phosphoserine modification. Residues 286 to 334 (ITQRHTDIESRLQKMQDNAKELDESRRKKIELLEKKERDEEQFLEKERR) are a coiled coil.

The protein belongs to the CWC25 family. Belongs to the 40S cdc5-associated complex (or cwf complex), a spliceosome sub-complex reminiscent of a late-stage spliceosome composed of the U2, U5 and U6 snRNAs and at least brr2, cdc5, cwf2/prp3, cwf3/syf1, cwf4/syf3, cwf5/ecm2, spp42/cwf6, cwf7/spf27, cwf8, cwf9, cwf10, cwf11, cwf12, prp45/cwf13, cwf14, cwf15, cwf16, cwf17, cwf18, cwf19, cwf20, cwf21, cwf22, cwf23, cwf24, cwf25, cwf26, cyp7/cwf27, cwf28, cwf29/ist3, lea1, msl1, prp5/cwf1, prp10, prp12/sap130, prp17, prp22, sap61, sap62, sap114, sap145, slu7, smb1, smd1, smd3, smf1, smg1 and syf2.

It localises to the nucleus. In terms of biological role, involved in mRNA splicing. This is Pre-mRNA-splicing factor cwf25 (cwf25) from Schizosaccharomyces pombe (strain 972 / ATCC 24843) (Fission yeast).